Reading from the N-terminus, the 388-residue chain is Pregnancy-associated glycoprotein (388 aa).

An N-terminal signal peptide occupies residues Met-1 to Cys-15. Residues Tyr-74–Ala-385 form the Peptidase A1 domain. Asp-92 is an active-site residue. Disulfide bonds link Cys-105–Cys-110 and Cys-266–Cys-270. Asp-275 is a catalytic residue. An intrachain disulfide couples Cys-309 to Cys-344. N-linked (GlcNAc...) asparagine glycosylation is present at Asn-356.

The protein belongs to the peptidase A1 family. In terms of tissue distribution, trophoblast and placental tissue.

The protein resides in the secreted. It is found in the extracellular space. This chain is Pregnancy-associated glycoprotein (PAG), found in Equus caballus (Horse).